The primary structure comprises 623 residues: Quinoprotein ethanol dehydrogenase (623 aa).

The N-terminal stretch at Met1–Ala34 is a signal peptide. The Ca(2+) site is built by Asp45 and Asn51. Glu95 is a pyrroloquinoline quinone binding site. An intrachain disulfide couples Cys139 to Cys140. Pyrroloquinoline quinone is bound by residues Arg145, Thr189, and His207–Ser209. Glu213 contacts Ca(2+). Positions Gly242–Gly279 are disordered. Ca(2+) contacts are provided by Asn300 and Asp350. Asp350 serves as the catalytic Proton acceptor. Arg378 lines the pyrroloquinoline quinone pocket. The disordered stretch occupies residues Arg414–Val436. WD repeat units lie at residues Glu515–Lys556 and Thr559–Pro601. Residues Trp523 and Ala587 each contribute to the pyrroloquinoline quinone site.

Belongs to the bacterial PQQ dehydrogenase family. As to quaternary structure, homodimer. Pyrroloquinoline quinone serves as cofactor. Requires Ca(2+) as cofactor.

It localises to the periplasm. The catalysed reaction is a primary alcohol + 2 Fe(III)-[cytochrome c] = an aldehyde + 2 Fe(II)-[cytochrome c] + 2 H(+). It catalyses the reaction ethanol + 2 Fe(III)-[cytochrome c] = acetaldehyde + 2 Fe(II)-[cytochrome c] + 2 H(+). The enzyme catalyses ethanol + A = acetaldehyde + AH2. It carries out the reaction 1-propanol + 2 Fe(III)-[cytochrome c] = propanal + 2 Fe(II)-[cytochrome c] + 2 H(+). It functions in the pathway alcohol metabolism; ethanol degradation; acetate from ethanol: step 1/2. With respect to regulation, enhanced by the presence of ethylamine or NH4(+) ions. Functionally, catalyzes the oxidation of ethanol and other primary alcohols to the corresponding aldehydes, except methanol, which is not a substrate. Uses a specific inducible cytochrome c550, encoded by the adjacent gene in the locus, as electron acceptor. Is a key enzyme of the carbon and energy metabolism during growth of P.putida on ethanol as the sole carbon and energy source. Displays lower activity on secondary alcohols, aldehydes and diols. Is not active with sugar alcohols such as glycerol and D-sorbitol. In vitro, reacts well with phenazine methosulfate (PMS) as an electron acceptor but not with NAD(P), potassium ferricyanide, or molecular oxygen. The protein is Quinoprotein ethanol dehydrogenase of Pseudomonas putida (Arthrobacter siderocapsulatus).